The sequence spans 554 residues: Dihydroxy-acid dehydratase (554 aa).

Residue D78 participates in Mg(2+) binding. C119 lines the [2Fe-2S] cluster pocket. 2 residues coordinate Mg(2+): D120 and K121. K121 is subject to N6-carboxylysine. [2Fe-2S] cluster is bound at residue C191. E444 serves as a coordination point for Mg(2+). S470 functions as the Proton acceptor in the catalytic mechanism.

Belongs to the IlvD/Edd family. As to quaternary structure, homodimer. It depends on [2Fe-2S] cluster as a cofactor. Mg(2+) is required as a cofactor.

The enzyme catalyses (2R)-2,3-dihydroxy-3-methylbutanoate = 3-methyl-2-oxobutanoate + H2O. It catalyses the reaction (2R,3R)-2,3-dihydroxy-3-methylpentanoate = (S)-3-methyl-2-oxopentanoate + H2O. It functions in the pathway amino-acid biosynthesis; L-isoleucine biosynthesis; L-isoleucine from 2-oxobutanoate: step 3/4. The protein operates within amino-acid biosynthesis; L-valine biosynthesis; L-valine from pyruvate: step 3/4. Functionally, functions in the biosynthesis of branched-chain amino acids. Catalyzes the dehydration of (2R,3R)-2,3-dihydroxy-3-methylpentanoate (2,3-dihydroxy-3-methylvalerate) into 2-oxo-3-methylpentanoate (2-oxo-3-methylvalerate) and of (2R)-2,3-dihydroxy-3-methylbutanoate (2,3-dihydroxyisovalerate) into 2-oxo-3-methylbutanoate (2-oxoisovalerate), the penultimate precursor to L-isoleucine and L-valine, respectively. In Nitratidesulfovibrio vulgaris (strain ATCC 29579 / DSM 644 / CCUG 34227 / NCIMB 8303 / VKM B-1760 / Hildenborough) (Desulfovibrio vulgaris), this protein is Dihydroxy-acid dehydratase.